The sequence spans 392 residues: Anhydro-N-acetylmuramic acid kinase (392 aa).

G19–D26 provides a ligand contact to ATP.

It belongs to the anhydro-N-acetylmuramic acid kinase family.

It carries out the reaction 1,6-anhydro-N-acetyl-beta-muramate + ATP + H2O = N-acetyl-D-muramate 6-phosphate + ADP + H(+). Its pathway is amino-sugar metabolism; 1,6-anhydro-N-acetylmuramate degradation. It functions in the pathway cell wall biogenesis; peptidoglycan recycling. Catalyzes the specific phosphorylation of 1,6-anhydro-N-acetylmuramic acid (anhMurNAc) with the simultaneous cleavage of the 1,6-anhydro ring, generating MurNAc-6-P. Is required for the utilization of anhMurNAc either imported from the medium or derived from its own cell wall murein, and thus plays a role in cell wall recycling. This Trichormus variabilis (strain ATCC 29413 / PCC 7937) (Anabaena variabilis) protein is Anhydro-N-acetylmuramic acid kinase.